Here is a 197-residue protein sequence, read N- to C-terminus: ADP-ribosylation factor-like protein 16 (197 aa).

GTP-binding positions include 30–37, 82–86, and 139–142; these read GATGVGKT, ELGGC, and NKID.

The protein belongs to the small GTPase superfamily. Arf family. As to quaternary structure, interacts with RIGI; this interaction is GTP-dependent and induced upon viral infection; this interaction suppresses the RNA sensing activity of RIGI.

It localises to the cytoplasm. Functionally, may suppress the RNA sensing activity of RIGI in a GTP-dependent. The chain is ADP-ribosylation factor-like protein 16 from Homo sapiens (Human).